Consider the following 85-residue polypeptide: MTRFFCCGSYFPGYPSYGTNFHRTFRATPLNCVVPLGSPLGYGCNGYSSLGYGFGGSSFSNLGCGYGGSFYRPWGSGSGFGYSTY.

Residues 37–82 form a 12 X 2 AA repeats of G-[YCGS] region; that stretch reads GSPLGYGCNGYSSLGYGFGGSSFSNLGCGYGGSFYRPWGSGSGFGY.

Belongs to the KRTAP type 7 family. Interacts with wool keratins. In terms of tissue distribution, wool.

In the wool cortex, wool keratin intermediate filaments are embedded in an interfilamentous matrix, consisting of hair keratin-associated proteins (KRTAP), which are essential for the formation of a rigid and resistant wool shaft through their extensive disulfide bond cross-linking with abundant cysteine residues of wool keratins. The matrix proteins include the high-sulfur and high-glycine-tyrosine keratins. This is Keratin-associated protein 7-1 (KRTAP7-1) from Ovis aries (Sheep).